Here is a 436-residue protein sequence, read N- to C-terminus: Cytochrome P450 monooxygenase phqO (436 aa).

Cys377 provides a ligand contact to heme.

It belongs to the cytochrome P450 family. The cofactor is heme.

It functions in the pathway alkaloid biosynthesis. In terms of biological role, cytochrome P450 monooxygenase; part of the gene cluster that mediates the biosynthesis of paraherquamide, a fungal indole alkaloid that belongs to a family of natural products containing a characteristic bicyclo[2.2.2]diazaoctane core. The first steps in the biosynthesis of paraherquamide is the production of the beta-methyl-proline precursor from L-isoleucine. They require oxidation of a terminally hydroxylated L-isoleucine to the corresponding aldehyde by enzymes which have still to be identified. Spontaneous cyclization and dehydration would yield the 4-methyl pyrolline-5-carboxylic acid, which is then reduced by the pyrroline-5-carboxylate reductase phqD leading to the beta-methyl-proline precursor. The next step of paraherquamide biosynthesis involves coupling of beta-methyl-proline and L-tryptophan by the bimodular NRPS phqB, to produce a monooxopiperazine intermediate. The reductase (R) domain of phqB utilizes NADPH for hydride transfer to reduce the thioester bond of the T domain-tethered linear dipeptide to a hemithioaminal intermediate, which spontaneously cleaves the C-S bond to release the aldehyde product. This compound undergoes spontaneous cyclization and dehydration to give a dienamine which is reverse prenylated at C-2 by the reverse prenyltransferase phqJ. The other prenyltransferase present in the cluster, phqI may be a redundant gene in the pathway. During biosynthetic assembly, the key step to produce the polycyclic core is catalyzed by the bifunctional reductase and intramolecular [4+2] Diels-Alderase, phqE, resulting in formation of the [2.2.2] diazaoctane intermediate preparaherquamide. Following formation of preparaherquamide, an indole 2,3-epoxidation-initiated pinacol-like rearrangement is catalyzed by the phqK FAD-dependent monooxygenase. The prenyltransferase phqA, the cytochrome P450 monooxygenase phqL, and the FAD-linked oxidoreductase phqH (or the cytochrome P450 monooxygenase phqM), are proposed to be involved in the formation of the pyran ring. The FAD-dependent monooxygenase phqK is likely responsible for generation of the spiro-oxindole, and the N-methylation is likely mediated by the phqN methyltransferase leading to the isolable natural product paraherquamide F. However, the order of these biosynthetic steps has still to be determined. In late-stage paraherquamide biosynthesis, the third P450 monooxygenase, phqO, is probably responsible for the C-14 hydroxylation, transforming paraherquamide F to paraherquamide G, and paraherquamide E to the final product paraherquamide A. The expansion from the 6-membered ring pyran (in paraherquamides F and G) to the 7-membered dioxepin ring (in paraherquamides A and E) represents a poorly understood but intriguing process that probably involves the 2-oxoglutarate-dependent dioxygenase phqC. Finally, the remaining members of the paraherquamide cluster, including phqI as well as phqM (or phqH), do not have a clearly prescribed role and appear to be redundant. The polypeptide is Cytochrome P450 monooxygenase phqO (Penicillium fellutanum).